Here is a 122-residue protein sequence, read N- to C-terminus: Ribosome-binding factor A (122 aa).

The protein belongs to the RbfA family. As to quaternary structure, monomer. Binds 30S ribosomal subunits, but not 50S ribosomal subunits or 70S ribosomes.

It localises to the cytoplasm. In terms of biological role, one of several proteins that assist in the late maturation steps of the functional core of the 30S ribosomal subunit. Associates with free 30S ribosomal subunits (but not with 30S subunits that are part of 70S ribosomes or polysomes). Required for efficient processing of 16S rRNA. May interact with the 5'-terminal helix region of 16S rRNA. The polypeptide is Ribosome-binding factor A (Syntrophomonas wolfei subsp. wolfei (strain DSM 2245B / Goettingen)).